A 103-amino-acid polypeptide reads, in one-letter code: Antitoxin VapB1 (103 aa).

Functionally, antitoxin component of a type II toxin-antitoxin (TA) system. Upon expression in E.coli neutralizes the effect of cognate toxin VapC1, partially inhibits the RNase activity of VapC1 in vitro. The chain is Antitoxin VapB1 (vapB1) from Rickettsia felis (strain ATCC VR-1525 / URRWXCal2) (Rickettsia azadi).